The following is a 190-amino-acid chain: Probable oligoribonuclease (190 aa).

The Exonuclease domain occupies 19–181 (MVWVDLEMTG…QDIEESIEEL (163 aa)). The active site involves Tyr140.

Belongs to the oligoribonuclease family.

3'-to-5' exoribonuclease specific for small oligoribonucleotides. In Dictyostelium discoideum (Social amoeba), this protein is Probable oligoribonuclease (rexo2-1).